Consider the following 281-residue polypeptide: Aliphatic sulfonates import ATP-binding protein SsuB (281 aa).

The 224-residue stretch at 40–263 folds into the ABC transporter domain; sequence LTLRNLRKSF…RRGSADLAAL (224 aa). ATP is bound at residue 72-79; sequence GRSGCGKS.

Belongs to the ABC transporter superfamily. Aliphatic sulfonates importer (TC 3.A.1.17.2) family. In terms of assembly, the complex is composed of two ATP-binding proteins (SsuB), two transmembrane proteins (SsuC) and a solute-binding protein (SsuA).

It localises to the cell inner membrane. It catalyses the reaction ATP + H2O + aliphatic sulfonate-[sulfonate-binding protein]Side 1 = ADP + phosphate + aliphatic sulfonateSide 2 + [sulfonate-binding protein]Side 1.. In terms of biological role, part of the ABC transporter complex SsuABC involved in aliphatic sulfonates import. Responsible for energy coupling to the transport system. This Rhodopseudomonas palustris (strain BisA53) protein is Aliphatic sulfonates import ATP-binding protein SsuB.